A 715-amino-acid polypeptide reads, in one-letter code: Palmitoyltransferase ZDHHC5 (715 aa).

Over 1 to 13 the chain is Cytoplasmic; sequence MPAESGKRFKPSK. Residues 14 to 34 traverse the membrane as a helical segment; it reads YVPVSAAAIFLVGATTLFFAF. The Extracellular segment spans residues 35–38; that stretch reads TCPG. The chain crosses the membrane as a helical span at residues 39 to 59; that stretch reads LSLCVSPAVPIYNAIVFLFVL. Residues 60-148 lie on the Cytoplasmic side of the membrane; that stretch reads ANFSMATFMD…NCIGRRNYRY (89 aa). Residue tyrosine 91 is modified to Phosphotyrosine. Residues 104 to 154 enclose the DHHC domain; it reads KWCATCRFYRPPRCSHCSVCDNCVEEFDHHCPWVNNCIGRRNYRYFFLFLL. Cysteine 134 serves as the catalytic S-palmitoyl cysteine intermediate. A helical membrane pass occupies residues 149–169; that stretch reads FFLFLLSLTAHIMGVFGFGLL. The Extracellular segment spans residues 170 to 191; it reads YVLYHMEELSGVRTAVTMAVMC. Residues 192-212 traverse the membrane as a helical segment; the sequence is VAGLFFIPVAGLTGFHVVLVA. Over 213-715 the chain is Cytoplasmic; it reads RGRTTNEQVT…VGGTTYEISV (503 aa). Phosphoserine is present on residues serine 247, serine 296, and serine 299. Positions 289–648 are disordered; the sequence is GELRRSKSKG…SQKAPAGVSE (360 aa). Threonine 303 carries the phosphothreonine modification. A Phosphoserine modification is found at serine 345. Phosphothreonine is present on residues threonine 348 and threonine 350. The span at 359 to 373 shows a compositional bias: low complexity; the sequence is SSSSTSAAMPHSSSA. A phosphoserine mark is found at serine 380, serine 398, serine 406, and serine 409. At threonine 411 the chain carries Phosphothreonine. A phosphoserine mark is found at serine 415, serine 425, serine 429, and serine 432. A compositionally biased stretch (low complexity) spans 422 to 432; sequence SSGSRSSSLKS. Threonine 436 is subject to Phosphothreonine. The span at 442-478 shows a compositional bias: polar residues; it reads QLQSIRSEGTTSTSYKSLANQTRNGSLSYDSLLTPSD. Phosphoserine is present on residues serine 529 and serine 554. Arginine 617 bears the Omega-N-methylarginine mark. Serine 621 bears the Phosphoserine mark. Threonine 659 carries the phosphothreonine modification. Residues 666–715 form a disordered region; it reads LKTAYSKSNGQPKSIGSASPGPGQQPLSSPTRGGVKKVSGVGGTTYEISV. Residues 668 to 679 show a composition bias toward polar residues; sequence TAYSKSNGQPKS. A compositionally biased stretch (low complexity) spans 681–695; it reads GSASPGPGQQPLSSP. 2 positions are modified to phosphoserine: serine 684 and serine 694. Omega-N-methylarginine is present on arginine 697.

Belongs to the DHHC palmitoyltransferase family. ERF2/ZDHHC9 subfamily. Post-translationally, phosphorylation regulates association with endocytic proteins and its subcellular localization. Phosphorylation by LYN during fatty acid uptake leads to inactivation of the activity. Autopalmitoylated. Palmitoylation of the C-terminal tail regulates stimulation-dependent plasma membrane motility.

It is found in the cell membrane. It catalyses the reaction L-cysteinyl-[protein] + hexadecanoyl-CoA = S-hexadecanoyl-L-cysteinyl-[protein] + CoA. In terms of biological role, palmitoyltransferase that catalyzes the addition of palmitate onto various protein substrates such as CTNND2, CD36, GSDMD, NLRP3, NOD1, NOD2, STAT3 and S1PR1 thus plays a role in various biological processes including cell adhesion, inflammation, fatty acid uptake, bacterial sensing or cardiac functions. Plays an important role in the regulation of synapse efficacy by mediating palmitoylation of delta-catenin/CTNND2, thereby increasing synaptic delivery and surface stabilization of alpha-amino-3-hydroxy-5-methyl-4-isoxazole propionic acid receptors (AMPARs). Under basal conditions, remains at the synaptic membrane through FYN-mediated phosphorylation that prevents association with endocytic proteins. Neuronal activity enhances the internalization and trafficking of DHHC5 from spines to dendritic shafts where it palmitoylates delta-catenin/CTNND2. Regulates cell adhesion at the plasma membrane by palmitoylating GOLGA7B and DSG2. Plays a role in innate immune response by mediating the palmitoylation of NOD1 and NOD2 and their proper recruitment to the bacterial entry site and phagosomes. Also participates in fatty acid uptake by palmitoylating CD36 and thereby targeting it to the plasma membrane. Upon binding of fatty acids to CD36, gets phosphorylated by LYN leading to inactivation and subsequent CD36 caveolar endocytosis. Controls oligodendrocyte development by catalyzing STAT3 palmitoylation. Acts as a regulator of inflammatory response by mediating palmitoylation of NLRP3 and GSDMD. Palmitoylates NLRP3 to promote inflammasome assembly and activation. Activates pyroptosis by catalyzing palmitoylation of gasdermin-D (GSDMD), thereby promoting membrane translocation and pore formation of GSDMD. This chain is Palmitoyltransferase ZDHHC5 (ZDHHC5), found in Canis lupus familiaris (Dog).